Consider the following 652-residue polypeptide: Small ribosomal subunit protein mS39 (652 aa).

Residues 1-37 (MYLSRQLRLLPRANIACSLSSSGAHYTTAAPAEDAPI) constitute a mitochondrion transit peptide. 5 PPR repeats span residues 129 to 163 (DSVV…GNPI), 225 to 259 (TPQS…QVQL), 260 to 299 (DTNT…KLRP), 300 to 338 (NLGT…GVNP), and 547 to 581 (TGQM…QHRI).

This sequence belongs to the mitochondrion-specific ribosomal protein mS39 family.

It localises to the mitochondrion. Mitochondrial protein that may have a role in mitochondrial translation. Essential for larval development. The chain is Small ribosomal subunit protein mS39 from Drosophila melanogaster (Fruit fly).